The chain runs to 403 residues: 4-hydroxy-3-methylbut-2-enyl diphosphate reductase (403 aa).

Cys-66 serves as a coordination point for [4Fe-4S] cluster. His-96 serves as a coordination point for (2E)-4-hydroxy-3-methylbut-2-enyl diphosphate. Position 96 (His-96) interacts with dimethylallyl diphosphate. His-96 contributes to the isopentenyl diphosphate binding site. Cys-157 lines the [4Fe-4S] cluster pocket. His-185 lines the (2E)-4-hydroxy-3-methylbut-2-enyl diphosphate pocket. His-185 serves as a coordination point for dimethylallyl diphosphate. His-185 provides a ligand contact to isopentenyl diphosphate. The active-site Proton donor is the Glu-187. A (2E)-4-hydroxy-3-methylbut-2-enyl diphosphate-binding site is contributed by Thr-250. Residue Cys-288 participates in [4Fe-4S] cluster binding. Residues Ser-317, Ser-318, Asn-319, and Ser-379 each contribute to the (2E)-4-hydroxy-3-methylbut-2-enyl diphosphate site. Dimethylallyl diphosphate contacts are provided by Ser-317, Ser-318, Asn-319, and Ser-379. Isopentenyl diphosphate contacts are provided by Ser-317, Ser-318, Asn-319, and Ser-379.

This sequence belongs to the IspH family. [4Fe-4S] cluster serves as cofactor.

It carries out the reaction isopentenyl diphosphate + 2 oxidized [2Fe-2S]-[ferredoxin] + H2O = (2E)-4-hydroxy-3-methylbut-2-enyl diphosphate + 2 reduced [2Fe-2S]-[ferredoxin] + 2 H(+). The enzyme catalyses dimethylallyl diphosphate + 2 oxidized [2Fe-2S]-[ferredoxin] + H2O = (2E)-4-hydroxy-3-methylbut-2-enyl diphosphate + 2 reduced [2Fe-2S]-[ferredoxin] + 2 H(+). It functions in the pathway isoprenoid biosynthesis; dimethylallyl diphosphate biosynthesis; dimethylallyl diphosphate from (2E)-4-hydroxy-3-methylbutenyl diphosphate: step 1/1. Its pathway is isoprenoid biosynthesis; isopentenyl diphosphate biosynthesis via DXP pathway; isopentenyl diphosphate from 1-deoxy-D-xylulose 5-phosphate: step 6/6. Catalyzes the conversion of 1-hydroxy-2-methyl-2-(E)-butenyl 4-diphosphate (HMBPP) into a mixture of isopentenyl diphosphate (IPP) and dimethylallyl diphosphate (DMAPP). Acts in the terminal step of the DOXP/MEP pathway for isoprenoid precursor biosynthesis. The polypeptide is 4-hydroxy-3-methylbut-2-enyl diphosphate reductase (Rippkaea orientalis (strain PCC 8801 / RF-1) (Cyanothece sp. (strain PCC 8801))).